The chain runs to 1134 residues: Protocadherin-18 (1134 aa).

A signal peptide spans 1-27 (MYQMNAKMHFTFVFALLVVSFNLDVLG). 6 Cadherin domains span residues 28–137 (KNLK…SPQF), 138–246 (SRSL…SPAF), 247–354 (EQQS…KPEI), 361–465 (PGKE…PPHF), 466–576 (QRSR…VPVV), and 582–697 (RNNT…APLD). The Extracellular segment spans residues 28–699 (KNLKYRIYEE…SVSQAPLDVS (672 aa)). An N-linked (GlcNAc...) asparagine glycan is attached at Asn103. Residue Asn269 is glycosylated (N-linked (GlcNAc...) asparagine). A glycan (N-linked (GlcNAc...) asparagine) is linked at Asn559. A helical transmembrane segment spans residues 700–720 (MIIIISLGAICAVLLVIMVLF). At 721–1134 (ATRCNREKKD…NKLLQDVRQS (414 aa)) the chain is on the cytoplasmic side. Disordered regions lie at residues 768-800 (TLPI…NSHQ), 868-888 (SLKD…DLGR), and 941-1003 (DYRS…TSSL). Over residues 791–800 (GSRQSHNSHQ) the composition is skewed to polar residues. Residues 868 to 877 (SLKDSGRGDS) show a composition bias toward basic and acidic residues. Residues 892 to 1134 (IDRLLGEGFS…NKLLQDVRQS (243 aa)) form an interaction with DAB1 region.

In terms of assembly, interacts with DAB1.

It is found in the cell membrane. Functionally, potential calcium-dependent cell-adhesion protein. The sequence is that of Protocadherin-18 (PCDH18) from Bos taurus (Bovine).